The primary structure comprises 397 residues: Tryptophan synthase beta chain (397 aa).

The residue at position 91 (lysine 91) is an N6-(pyridoxal phosphate)lysine.

Belongs to the TrpB family. In terms of assembly, tetramer of two alpha and two beta chains. Pyridoxal 5'-phosphate serves as cofactor.

The catalysed reaction is (1S,2R)-1-C-(indol-3-yl)glycerol 3-phosphate + L-serine = D-glyceraldehyde 3-phosphate + L-tryptophan + H2O. The protein operates within amino-acid biosynthesis; L-tryptophan biosynthesis; L-tryptophan from chorismate: step 5/5. In terms of biological role, the beta subunit is responsible for the synthesis of L-tryptophan from indole and L-serine. The sequence is that of Tryptophan synthase beta chain from Bacillus cereus (strain ZK / E33L).